We begin with the raw amino-acid sequence, 201 residues long: Small ribosomal subunit protein uS4 (201 aa).

The 64-residue stretch at 91-154 (SRLDNVIYRA…QKMEWFEEAQ (64 aa)) folds into the S4 RNA-binding domain.

It belongs to the universal ribosomal protein uS4 family. As to quaternary structure, part of the 30S ribosomal subunit. Contacts protein S5. The interaction surface between S4 and S5 is involved in control of translational fidelity.

In terms of biological role, one of the primary rRNA binding proteins, it binds directly to 16S rRNA where it nucleates assembly of the body of the 30S subunit. Functionally, with S5 and S12 plays an important role in translational accuracy. The protein is Small ribosomal subunit protein uS4 of Corynebacterium aurimucosum (strain ATCC 700975 / DSM 44827 / CIP 107346 / CN-1) (Corynebacterium nigricans).